We begin with the raw amino-acid sequence, 430 residues long: tRNA(Ile)-lysidine synthase (430 aa).

27-32 is a binding site for ATP; sequence SGGSDS.

The protein belongs to the tRNA(Ile)-lysidine synthase family.

The protein resides in the cytoplasm. The catalysed reaction is cytidine(34) in tRNA(Ile2) + L-lysine + ATP = lysidine(34) in tRNA(Ile2) + AMP + diphosphate + H(+). In terms of biological role, ligates lysine onto the cytidine present at position 34 of the AUA codon-specific tRNA(Ile) that contains the anticodon CAU, in an ATP-dependent manner. Cytidine is converted to lysidine, thus changing the amino acid specificity of the tRNA from methionine to isoleucine. This chain is tRNA(Ile)-lysidine synthase, found in Rickettsia bellii (strain OSU 85-389).